The sequence spans 438 residues: MGYQTIPSQGLSGEICVPGDKSISHRAVLLAAIAEGQTQVDGFLMGADNLAMVSALQQMGASIQVIEDENILVVEGVGMTGLQAPPEALDCGNSGTAIRLLSGLLAGQPFNTVLTGDSSLQRRPMKRIIDPLTLMGAKIDSTGNVPPLKIYGNPRLTGIHYQLPMASAQVKSCLLLAGLYARGKTCITEPAPSRDHTERLLKHFHYTLQKDKQSICVSGGGKLKANDISIPGDISSAAFFIVAATITPGSAIRLCRVGVNPTRLGVINLLKMMGADIEVTHYTEKNEEPTADITVRHARLKGIDIPPDQVPLTIDEFPVLLIAAAVAQGKTVLRDVAELRVKETDRIAAMVDGLQKLGIAAESLPDGVIIQGGTLEGGEVNSYDDHRIAMAFAVAGTLAKGPVRIRNCDNVKTSFPNFVELANEVGMNVKGVRGRGGF.

Residues Lys-21, Ser-22, and Arg-26 each coordinate 3-phosphoshikimate. Residue Lys-21 participates in phosphoenolpyruvate binding. Positions 95 and 123 each coordinate phosphoenolpyruvate. 3-phosphoshikimate-binding residues include Ser-167, Gln-169, Asp-315, and Lys-342. Residue Gln-169 coordinates phosphoenolpyruvate. Asp-315 serves as the catalytic Proton acceptor. Phosphoenolpyruvate is bound by residues Arg-346 and Arg-387.

Belongs to the EPSP synthase family. As to quaternary structure, monomer.

The protein resides in the cytoplasm. The catalysed reaction is 3-phosphoshikimate + phosphoenolpyruvate = 5-O-(1-carboxyvinyl)-3-phosphoshikimate + phosphate. The protein operates within metabolic intermediate biosynthesis; chorismate biosynthesis; chorismate from D-erythrose 4-phosphate and phosphoenolpyruvate: step 6/7. Functionally, catalyzes the transfer of the enolpyruvyl moiety of phosphoenolpyruvate (PEP) to the 5-hydroxyl of shikimate-3-phosphate (S3P) to produce enolpyruvyl shikimate-3-phosphate and inorganic phosphate. This chain is 3-phosphoshikimate 1-carboxyvinyltransferase, found in Coxiella burnetii (strain CbuK_Q154) (Coxiella burnetii (strain Q154)).